The chain runs to 519 residues: Exodeoxyribonuclease 7 large subunit (519 aa).

Residues 500–519 (VGRGKTRKPKEEPPAQGSLL) are disordered.

This sequence belongs to the XseA family. Heterooligomer composed of large and small subunits.

It localises to the cytoplasm. The catalysed reaction is Exonucleolytic cleavage in either 5'- to 3'- or 3'- to 5'-direction to yield nucleoside 5'-phosphates.. Bidirectionally degrades single-stranded DNA into large acid-insoluble oligonucleotides, which are then degraded further into small acid-soluble oligonucleotides. This Cereibacter sphaeroides (strain KD131 / KCTC 12085) (Rhodobacter sphaeroides) protein is Exodeoxyribonuclease 7 large subunit.